The following is a 346-amino-acid chain: MTDDRIIGAGATREDDAADASIRPKRLADYLGQVPVREQMEIYIQAAKGRGDALDHVLIFGPPGLGKTTLSHVIANELGVALRVTSGPVIEKAGDLAALLTNLQPHDVLFIDEIHRLSPVVEEVLYPAMEDFQIDIMIGEGPAARSIKIDLPPFTLIGATTRAGLLTAPLRDRFGIVQRLEFYSVEELTRIVRRSASILGIDCTADGAGEIARRARGTPRIANRLLRRVRDYAQVKAGGHIDEPVAQAAMKMLKVDPEGFDELDRRLLKTMVDYFDGGPVGIESLAAALSEERGTLEDVVEPYLIQQGFLVRTARGRMATHKAYRHMGLKPKNPPQDLFAEVPDVG.

Residues 2–183 are large ATPase domain (RuvB-L); it reads TDDRIIGAGA…FGIVQRLEFY (182 aa). Residues Ile22, Arg23, Gly64, Lys67, Thr68, Thr69, 130 to 132, Arg173, Tyr183, and Arg220 contribute to the ATP site; that span reads EDF. Thr68 lines the Mg(2+) pocket. Residues 184–254 are small ATPAse domain (RuvB-S); sequence SVEELTRIVR…VAQAAMKMLK (71 aa). A head domain (RuvB-H) region spans residues 257–346; that stretch reads PEGFDELDRR…DLFAEVPDVG (90 aa). DNA contacts are provided by Arg293, Arg312, and Arg317.

This sequence belongs to the RuvB family. In terms of assembly, homohexamer. Forms an RuvA(8)-RuvB(12)-Holliday junction (HJ) complex. HJ DNA is sandwiched between 2 RuvA tetramers; dsDNA enters through RuvA and exits via RuvB. An RuvB hexamer assembles on each DNA strand where it exits the tetramer. Each RuvB hexamer is contacted by two RuvA subunits (via domain III) on 2 adjacent RuvB subunits; this complex drives branch migration. In the full resolvosome a probable DNA-RuvA(4)-RuvB(12)-RuvC(2) complex forms which resolves the HJ.

It is found in the cytoplasm. It catalyses the reaction ATP + H2O = ADP + phosphate + H(+). Its function is as follows. The RuvA-RuvB-RuvC complex processes Holliday junction (HJ) DNA during genetic recombination and DNA repair, while the RuvA-RuvB complex plays an important role in the rescue of blocked DNA replication forks via replication fork reversal (RFR). RuvA specifically binds to HJ cruciform DNA, conferring on it an open structure. The RuvB hexamer acts as an ATP-dependent pump, pulling dsDNA into and through the RuvAB complex. RuvB forms 2 homohexamers on either side of HJ DNA bound by 1 or 2 RuvA tetramers; 4 subunits per hexamer contact DNA at a time. Coordinated motions by a converter formed by DNA-disengaged RuvB subunits stimulates ATP hydrolysis and nucleotide exchange. Immobilization of the converter enables RuvB to convert the ATP-contained energy into a lever motion, pulling 2 nucleotides of DNA out of the RuvA tetramer per ATP hydrolyzed, thus driving DNA branch migration. The RuvB motors rotate together with the DNA substrate, which together with the progressing nucleotide cycle form the mechanistic basis for DNA recombination by continuous HJ branch migration. Branch migration allows RuvC to scan DNA until it finds its consensus sequence, where it cleaves and resolves cruciform DNA. The polypeptide is Holliday junction branch migration complex subunit RuvB (Stenotrophomonas maltophilia (strain K279a)).